The chain runs to 307 residues: Yop proteins translocation protein Q (307 aa).

The protein belongs to the FliN/MopA/SpaO family.

Component of the Yop secretion machinery. This chain is Yop proteins translocation protein Q (yscQ), found in Yersinia pestis.